A 555-amino-acid chain; its full sequence is High-affinity gluconate transporter ght3 (555 aa).

Residues 1-9 (MNRFITSIL) are Cytoplasmic-facing. Residues 10–30 (VVFISMSGWLQGADTGSISGI) form a helical membrane-spanning segment. Residues 31 to 58 (LGMRDFQSRFADRYNPISNSYSYSAWRQ) are Extracellular-facing. The helical transmembrane segment at 59 to 79 (ALLTGTINAGCLFGAMLSSPF) threads the bilayer. At 80-87 (TERIGKKY) the chain is on the cytoplasmic side. A helical membrane pass occupies residues 88–108 (SICFFSGVYIIAELLLVTAVP). Over 109 to 112 (SWIQ) the chain is Extracellular. The helical transmembrane segment at 113 to 133 (VLVGKILAGVGIGALSVLSPG) threads the bilayer. Residues 134–144 (YQSEVAPPQIR) are Cytoplasmic-facing. A helical transmembrane segment spans residues 145 to 165 (GAVVATYQIFSTGAALVAACI). Residues 166–179 (NMGTHKLRKTASWR) are Extracellular-facing. A helical transmembrane segment spans residues 180–200 (TSFGINMLWGILLMVGVLFLP). At 201–266 (ESPRYLIYKG…IFGKDIRYRT (66 aa)) the chain is on the cytoplasmic side. A helical membrane pass occupies residues 267 to 285 (CLGFLVMLFRELIGNNYYF). Topologically, residues 286–301 (YYATQVFKGTGMTDIF) are extracellular. The chain crosses the membrane as a helical span at residues 302–322 (LPAVILGAINFGTTFGALYTI). The Cytoplasmic portion of the chain corresponds to 323–328 (DNLGRR). The chain crosses the membrane as a helical span at residues 329-349 (NPLIFGAAFQSICFFIYAAVG). The Extracellular segment spans residues 350-363 (DRKLIYKNGTSDHR). N-linked (GlcNAc...) asparagine glycosylation occurs at asparagine 357. A helical transmembrane segment spans residues 364 to 384 (AGSVMIVFSCLFLFSYCCSWG). The Cytoplasmic segment spans residues 385–404 (PMGWVIVGETFPIRYRSKCA). The helical transmembrane segment at 405 to 425 (SVATSGNWLGNFMISFFTPFI) threads the bilayer. Residues 426 to 432 (NNAIGFK) lie on the Extracellular side of the membrane. The chain crosses the membrane as a helical span at residues 433–453 (LGYIYACINLFSSFMIFFLAK). Over 454 to 555 (ETKGLTLEEV…FSEDSHPTYI (102 aa)) the chain is Cytoplasmic. Residues 492-509 (KEEEKREREKSKGIRGQE) show a composition bias toward basic and acidic residues. Residues 492–555 (KEEEKREREK…FSEDSHPTYI (64 aa)) are disordered. The segment covering 510–521 (EEFIENADEDNN) has biased composition (acidic residues). Over residues 522-534 (DSSSSSGSVVSAV) the composition is skewed to low complexity. A compositionally biased stretch (basic and acidic residues) spans 545–555 (RFSEDSHPTYI).

It belongs to the major facilitator superfamily. Sugar transporter (TC 2.A.1.1) family.

It localises to the membrane. In terms of biological role, high-affinity gluconate transporter. This is High-affinity gluconate transporter ght3 (ght3) from Schizosaccharomyces pombe (strain 972 / ATCC 24843) (Fission yeast).